The following is a 167-amino-acid chain: uncharacterized protein (167 aa).

A disordered region spans residues 1–21; it reads MFDFSFPTPASAGTRMGPASC.

This is an uncharacterized protein from Homo sapiens (Human).